We begin with the raw amino-acid sequence, 40 residues long: Photosystem II reaction center protein J (40 aa).

The chain crosses the membrane as a helical span at residues 8–28 (IPLWLIGTLTGILVIGLIGIF).

It belongs to the PsbJ family. As to quaternary structure, PSII is composed of 1 copy each of membrane proteins PsbA, PsbB, PsbC, PsbD, PsbE, PsbF, PsbH, PsbI, PsbJ, PsbK, PsbL, PsbM, PsbT, PsbX, PsbY, PsbZ, Psb30/Ycf12, at least 3 peripheral proteins of the oxygen-evolving complex and a large number of cofactors. It forms dimeric complexes.

The protein localises to the plastid. It localises to the chloroplast thylakoid membrane. One of the components of the core complex of photosystem II (PSII). PSII is a light-driven water:plastoquinone oxidoreductase that uses light energy to abstract electrons from H(2)O, generating O(2) and a proton gradient subsequently used for ATP formation. It consists of a core antenna complex that captures photons, and an electron transfer chain that converts photonic excitation into a charge separation. The sequence is that of Photosystem II reaction center protein J from Phalaenopsis aphrodite subsp. formosana (Moth orchid).